The primary structure comprises 271 residues: Phosphate import ATP-binding protein PstB (271 aa).

One can recognise an ABC transporter domain in the interval 13 to 266 (VRTAPVSEAE…PKHPYTEAYI (254 aa)). 57-64 (GPSGCGKS) provides a ligand contact to ATP.

This sequence belongs to the ABC transporter superfamily. Phosphate importer (TC 3.A.1.7) family. The complex is composed of two ATP-binding proteins (PstB), two transmembrane proteins (PstC and PstA) and a solute-binding protein (PstS).

Its subcellular location is the cell inner membrane. It carries out the reaction phosphate(out) + ATP + H2O = ADP + 2 phosphate(in) + H(+). Part of the ABC transporter complex PstSACB involved in phosphate import. Responsible for energy coupling to the transport system. The protein is Phosphate import ATP-binding protein PstB of Thermus thermophilus (strain ATCC 27634 / DSM 579 / HB8).